The sequence spans 406 residues: Cysteine--tRNA ligase (406 aa).

A Zn(2+)-binding site is contributed by Cys16. A 'HIGH' region motif is present at residues Pro18–Asn28. The Zn(2+) site is built by Cys192, His218, and Glu222. The 'KMSKS' region motif lies at Lys250–Ser254. Lys253 contacts ATP.

This sequence belongs to the class-I aminoacyl-tRNA synthetase family. In terms of assembly, monomer. Requires Zn(2+) as cofactor.

The protein localises to the cytoplasm. It catalyses the reaction tRNA(Cys) + L-cysteine + ATP = L-cysteinyl-tRNA(Cys) + AMP + diphosphate. The protein is Cysteine--tRNA ligase of Mesomycoplasma hyopneumoniae (strain J / ATCC 25934 / NCTC 10110) (Mycoplasma hyopneumoniae).